The primary structure comprises 206 residues: Putative 3-methyladenine DNA glycosylase (206 aa).

It belongs to the DNA glycosylase MPG family.

The protein is Putative 3-methyladenine DNA glycosylase of Staphylococcus carnosus (strain TM300).